The following is a 370-amino-acid chain: Chorismate synthase (370 aa).

R48 is a binding site for NADP(+). Residues 125–127, 241–242, G286, 301–305, and R327 each bind FMN; these read RSS, NA, and KPTSS.

It belongs to the chorismate synthase family. In terms of assembly, homotetramer. FMNH2 is required as a cofactor.

The enzyme catalyses 5-O-(1-carboxyvinyl)-3-phosphoshikimate = chorismate + phosphate. Its pathway is metabolic intermediate biosynthesis; chorismate biosynthesis; chorismate from D-erythrose 4-phosphate and phosphoenolpyruvate: step 7/7. Functionally, catalyzes the anti-1,4-elimination of the C-3 phosphate and the C-6 proR hydrogen from 5-enolpyruvylshikimate-3-phosphate (EPSP) to yield chorismate, which is the branch point compound that serves as the starting substrate for the three terminal pathways of aromatic amino acid biosynthesis. This reaction introduces a second double bond into the aromatic ring system. The sequence is that of Chorismate synthase from Ruegeria sp. (strain TM1040) (Silicibacter sp.).